Consider the following 447-residue polypeptide: Putative bacteriocin-SkfA transport system permease protein SkfF (447 aa).

Over 1-3 (MPF) the chain is Cytoplasmic. A helical membrane pass occupies residues 4–22 (LIMLLFVGAIGFQVSFVSR). Residues 23–29 (STTWDMS) lie on the Extracellular side of the membrane. Residues 30 to 50 (IAGWVLTGVFILYTAFGLFSN) traverse the membrane as a helical segment. Topologically, residues 51-59 (RLPSQMADI) are cytoplasmic. The chain crosses the membrane as a helical span at residues 60–80 (IWLYGTATSFSKVVYSVLFFS). At 81–85 (VTWKA) the chain is on the extracellular side. The helical transmembrane segment at 86 to 104 (LLWIISAIFGDVLIVLLSG) threads the bilayer. Residues 105–113 (DHINLLGRS) are Cytoplasmic-facing. The helical transmembrane segment at 114–134 (IIFVGLFFIAEVWLMSVSCAR) threads the bilayer. The Extracellular portion of the chain corresponds to 135-141 (TVKKMKR). The chain crosses the membrane as a helical span at residues 142–160 (VYVLVFLLMLGIYSICLYR). Residues 161–189 (FFFLQHSSGIWESIARFISGVGLVFDTLS) are Cytoplasmic-facing. A helical transmembrane segment spans residues 190–208 (PLYVVVFIGIITVSFMTIA). Topologically, residues 209-247 (FTSRQVEMKESLVKEAEFWEEFQERQFGSGQIIQKPKTT) are extracellular. A helical membrane pass occupies residues 248–268 (WWGLQGLNGIWSFLWLELLLF). Residues 269–297 (KKYLFFHSIHTVMLSGVFYVVIFMYPEWF) are Cytoplasmic-facing. The chain crosses the membrane as a helical span at residues 298–318 (YLLFFLIVSAVMLSSYYSGIV). Residues 319–341 (RHSQSGTLHLFPGALWKKIIILE) are Extracellular-facing. A helical transmembrane segment spans residues 342–360 (LTNTVWLYILYCVSITFMA). Residues 361–363 (VGN) are Cytoplasmic-facing. The helical transmembrane segment at 364 to 382 (LVYWYIYGLGIYIWFMTIR) threads the bilayer. The Extracellular segment spans residues 383–404 (LFAFTHTNRNDIKLSLPQYYKS). A helical transmembrane segment spans residues 405 to 423 (FFMALGLSGICLYVIHLLT). Over 424-426 (ADW) the chain is Cytoplasmic. A helical transmembrane segment spans residues 427–447 (YTLVVVVCIGSLSWCLFYRFR).

Its subcellular location is the cell membrane. Its function is as follows. Probably part of the ABC transporter SkfEF involved in the export of the bacteriocin SKF. Probably responsible for the translocation of bacteriocin SkfA across the membrane. In Bacillus subtilis (strain 168), this protein is Putative bacteriocin-SkfA transport system permease protein SkfF.